The following is a 1012-amino-acid chain: Isoleucine--tRNA ligase, mitochondrial (1012 aa).

The N-terminal 48 residues, 1 to 48, are a transit peptide targeting the mitochondrion; it reads MHWGLCPRGPGAAAVAAAGSFWGPARLPSRLGCLGMTRRLVVRSVAGA. N6-succinyllysine is present on lysine 56. Lysine 74 bears the N6-acetyllysine; alternate mark. Position 74 is an N6-succinyllysine; alternate (lysine 74). Residues 116 to 126 carry the 'HIGH' region motif; sequence PYANGDPHVGH. Residue lysine 194 is modified to N6-succinyllysine. Lysine 233 carries the N6-acetyllysine modification. Lysine 241 carries the N6-acetyllysine; alternate modification. An N6-succinyllysine; alternate modification is found at lysine 241. N6-succinyllysine occurs at positions 479 and 500. Lysine 664 and lysine 667 together coordinate ATP. The short motif at 664–668 is the 'KMSKS' region element; it reads KMSKS. Lysine 725 is modified (N6-acetyllysine). Residues lysine 775 and lysine 781 each carry the N6-acetyllysine; alternate modification. An N6-succinyllysine; alternate mark is found at lysine 775 and lysine 781.

The protein belongs to the class-I aminoacyl-tRNA synthetase family.

The protein resides in the mitochondrion matrix. It catalyses the reaction tRNA(Ile) + L-isoleucine + ATP = L-isoleucyl-tRNA(Ile) + AMP + diphosphate. Its function is as follows. Aminoacyl-tRNA synthetase that catalyzes the specific attachment of isoleucine to its cognate tRNA (tRNA(Ile)). The polypeptide is Isoleucine--tRNA ligase, mitochondrial (Mus musculus (Mouse)).